The primary structure comprises 614 residues: Nuclear receptor subfamily 1 group D member 1 (614 aa).

The segment covering 1–12 (MTTLDSNNNTGG) has biased composition (polar residues). Positions 1 to 70 (MTTLDSNNNT…TQDPARSFGS (70 aa)) are required for phosphorylation by CSNK1E and cytoplasmic localization. The disordered stretch occupies residues 1 to 119 (MTTLDSNNNT…SSRVSPSKST (119 aa)). The tract at residues 1-128 (MTTLDSNNNT…TSNITKLNGM (128 aa)) is modulating. A compositionally biased stretch (low complexity) spans 14–34 (ITYIGSSGSSPSRTSPESLYS). A compositionally biased stretch (polar residues) spans 35-48 (DNSNGSFQSLTQGC). Residues 49–284 (PTYFPPSPTG…PPRSPSPEPT (236 aa)) form a crucial for activation of GJA1 region. Residues S55 and S59 each carry the phosphoserine; by GSK3-beta modification. Residues 69–102 (GSIPPSLSDDGSPSSSSSSSSSSSSFYNGSPPGS) show a composition bias toward low complexity. The segment at residues 129–205 (VLLCKVCGDV…VGMSRDAVRF (77 aa)) is a DNA-binding region (nuclear receptor). NR C4-type zinc fingers lie at residues 132-152 (CKVCGDVASGFHYGVHACEGC) and 169-193 (CLKNENCSIVRINRNRCQQCRFKKC). N6-acetyllysine; by KAT5 occurs at positions 191 and 192. A compositionally biased stretch (polar residues) spans 233 to 243 (SQCPLETSPTQ). 2 disordered regions span residues 233–285 (SQCP…EPTV) and 311–345 (PGNFNANHASGSPPATTPHRWENQGCPPAPNDNNT). Residues 244–261 (HPTPGPMGPSPPPAPVPS) are compositionally biased toward pro residues. Residue T274 is modified to Phosphothreonine; by CDK1. Positions 284–614 (TVEDVISQVA…KLLSFRVDAQ (331 aa)) constitute an NR LBD domain. A compositionally biased stretch (polar residues) spans 311–324 (PGNFNANHASGSPP). At K400 the chain carries N6-acetyllysine. Residue C418 participates in heme binding. K591 carries the N6-acetyllysine modification. A heme-binding site is contributed by H602.

Belongs to the nuclear hormone receptor family. NR1 subfamily. Binds DNA as a monomer or a homodimer. Interacts with C1D, NR2E3 and SP1. Interacts with OPHN1 (via C-terminus). Interacts with ZNHIT1. Interacts with PER2; the interaction associates PER2 to BMAL1 promoter region. Interacts with CRY1. Interacts with CCAR2. Interacts with SIAH2. Interacts with CDK1. Interacts with FBXW7. Interacts with HUWE1. Interacts with NR0B2. Interacts with NFIL3. Interacts (via domain NR LBD) with HSP90AA1 and HSP90AB1. In terms of processing, ubiquitinated, leading to its proteasomal degradation. Ubiquitinated by SIAH2; leading to its proteasomal degradation. Ubiquitinated by the SCF(FBXW7) complex when phosphorylated by CDK1 leading to its proteasomal degradation. Rapidly ubiquitinated in response to inflammatory triggers and sumoylation is a prerequisite to its ubiquitination. Post-translationally, sumoylated by UBE2I, desumoylated by SENP1, and sumoylation is a prerequisite to its ubiquitination. Phosphorylated by CSNK1E; phosphorylation enhances its cytoplasmic localization. In terms of processing, undergoes lysosome-mediated degradation in a time-dependent manner in the liver. As to expression, widely expressed. Expressed at high levels in the liver, adipose tissue, skeletal muscle and brain. Also expressed in endothelial cells (ECs), vascular smooth muscle cells (VSMCs) and macrophages. Expression oscillates diurnally in the suprachiasmatic nucleus (SCN) of the hypothalamus as well as in peripheral tissues. Expression increases during the differentiation of pre-adipocytes into mature adipocytes. Expressed at high levels in some squamous carcinoma cell lines.

It is found in the nucleus. It localises to the cytoplasm. Its subcellular location is the cell projection. The protein localises to the dendrite. The protein resides in the dendritic spine. Its function is as follows. Transcriptional repressor which coordinates circadian rhythm and metabolic pathways in a heme-dependent manner. Integral component of the complex transcription machinery that governs circadian rhythmicity and forms a critical negative limb of the circadian clock by directly repressing the expression of core clock components BMAL1, CLOCK and CRY1. Also regulates genes involved in metabolic functions, including lipid and bile acid metabolism, adipogenesis, gluconeogenesis and the macrophage inflammatory response. Acts as a receptor for heme which stimulates its interaction with the NCOR1/HDAC3 corepressor complex, enhancing transcriptional repression. Recognizes two classes of DNA response elements within the promoter of its target genes and can bind to DNA as either monomers or homodimers, depending on the nature of the response element. Binds as a monomer to a response element composed of the consensus half-site motif 5'-[A/G]GGTCA-3' preceded by an A/T-rich 5' sequence (RevRE), or as a homodimer to a direct repeat of the core motif spaced by two nucleotides (RevDR-2). Acts as a potent competitive repressor of ROR alpha (RORA) function and regulates the levels of its ligand heme by repressing the expression of PPARGC1A, a potent inducer of heme synthesis. Regulates lipid metabolism by repressing the expression of APOC3 and by influencing the activity of sterol response element binding proteins (SREBPs); represses INSIG2 which interferes with the proteolytic activation of SREBPs which in turn govern the rhythmic expression of enzymes with key functions in sterol and fatty acid synthesis. Regulates gluconeogenesis via repression of G6PC1 and PEPCK and adipocyte differentiation via repression of PPARG. Regulates glucagon release in pancreatic alpha-cells via the AMPK-NAMPT-SIRT1 pathway and the proliferation, glucose-induced insulin secretion and expression of key lipogenic genes in pancreatic-beta cells. Positively regulates bile acid synthesis by increasing hepatic expression of CYP7A1 via repression of NR0B2 and NFIL3 which are negative regulators of CYP7A1. Modulates skeletal muscle oxidative capacity by regulating mitochondrial biogenesis and autophagy; controls mitochondrial biogenesis and respiration by interfering with the STK11-PRKAA1/2-SIRT1-PPARGC1A signaling pathway. Represses the expression of SERPINE1/PAI1, an important modulator of cardiovascular disease and the expression of inflammatory cytokines and chemokines in macrophages. Represses gene expression at a distance in macrophages by inhibiting the transcription of enhancer-derived RNAs (eRNAs). Plays a role in the circadian regulation of body temperature and negatively regulates thermogenic transcriptional programs in brown adipose tissue (BAT); imposes a circadian oscillation in BAT activity, increasing body temperature when awake and depressing thermogenesis during sleep. In concert with NR2E3, regulates transcriptional networks critical for photoreceptor development and function. In addition to its activity as a repressor, can also act as a transcriptional activator. In the ovarian granulosa cells acts as a transcriptional activator of STAR which plays a role in steroid biosynthesis. In collaboration with SP1, activates GJA1 transcription in a heme-independent manner. Represses the transcription of CYP2B10, CYP4A10 and CYP4A14. Represses the transcription of CES2. Represses and regulates the circadian expression of TSHB in a NCOR1-dependent manner. Negatively regulates the protein stability of NR3C1 and influences the time-dependent subcellular distribution of NR3C1, thereby affecting its transcriptional regulatory activity. Plays a critical role in the circadian control of neutrophilic inflammation in the lung; under resting, non-stress conditions, acts as a rhythmic repressor to limit inflammatory activity whereas in the presence of inflammatory triggers undergoes ubiquitin-mediated degradation thereby relieving inhibition of the inflammatory response. Plays a key role in the circadian regulation of microglial activation and neuroinflammation; suppresses microglial activation through the NF-kappaB pathway in the central nervous system. Plays a role in the regulation of the diurnal rhythms of lipid and protein metabolism in the skeletal muscle via transcriptional repression of genes controlling lipid and amino acid metabolism in the muscle. The protein is Nuclear receptor subfamily 1 group D member 1 (NR1D1) of Homo sapiens (Human).